The sequence spans 796 residues: Exocyst complex component 3 (796 aa).

Residues 87–174 (PQLKEKLREL…GTNTEKEQML (88 aa)) adopt a coiled-coil conformation.

Belongs to the SEC6 family. The exocyst complex is composed of sec-3/exoc1, sec-5/exoc2, sec-6/exoc3, sec-8/exoc4, sec-10/exoc5, sec-15/exoc6, exo-70/exoc7 and exo-84/exoc8.

Functionally, component of the exocyst complex involved in the docking of exocytic vesicles with fusion sites on the plasma membrane. In Caenorhabditis elegans, this protein is Exocyst complex component 3 (sec-6).